A 928-amino-acid chain; its full sequence is 2-oxoglutarate dehydrogenase E1 component (928 aa).

Belongs to the alpha-ketoglutarate dehydrogenase family. As to quaternary structure, homodimer. Part of the 2-oxoglutarate dehydrogenase (OGDH) complex composed of E1 (2-oxoglutarate dehydrogenase), E2 (dihydrolipoamide succinyltransferase) and E3 (dihydrolipoamide dehydrogenase); the complex contains multiple copies of the three enzymatic components (E1, E2 and E3). Thiamine diphosphate is required as a cofactor.

It catalyses the reaction N(6)-[(R)-lipoyl]-L-lysyl-[protein] + 2-oxoglutarate + H(+) = N(6)-[(R)-S(8)-succinyldihydrolipoyl]-L-lysyl-[protein] + CO2. Functionally, E1 component of the 2-oxoglutarate dehydrogenase (OGDH) complex which catalyzes the decarboxylation of 2-oxoglutarate, the first step in the conversion of 2-oxoglutarate to succinyl-CoA and CO(2). In Rickettsia conorii (strain ATCC VR-613 / Malish 7), this protein is 2-oxoglutarate dehydrogenase E1 component (sucA).